A 121-amino-acid chain; its full sequence is Fumarate reductase subunit D (121 aa).

3 consecutive transmembrane segments (helical) span residues 22 to 42 (GVWFAMITPVTVLLMGILLPL), 57 to 77 (AFVSHPIGGAFTVLSLSLPMW), and 100 to 120 (YACYLAAALVTVLATVWVIQL).

This sequence belongs to the FrdD family. As to quaternary structure, part of an enzyme complex containing four subunits: a flavoprotein (FrdA), an iron-sulfur protein (FrdB), and two hydrophobic anchor proteins (FrdC and FrdD).

The protein resides in the cell inner membrane. In terms of biological role, anchors the catalytic components of the fumarate reductase complex to the cell membrane, binds quinones. The sequence is that of Fumarate reductase subunit D from Shewanella putrefaciens (strain CN-32 / ATCC BAA-453).